We begin with the raw amino-acid sequence, 111 residues long: MRKTPKNLESLHKFAEAYAKLSRTYFCIDQSITALVIEGLARHKDDYGAPLCPCRHYENKKTEVLAAYWNCPCVPMRERKECHCMLFLQPSNEFSGESQLISKDDLQKHLS.

A [4Fe-4S] cluster-binding site is contributed by cysteine 52. Catalysis depends on cysteine 54, which acts as the Nucleophile. A disulfide bond links cysteine 54 and cysteine 84. Positions 71, 73, and 82 each coordinate [4Fe-4S] cluster.

The protein belongs to the ferredoxin thioredoxin reductase beta subunit family. As to quaternary structure, heterodimer of subunit A (variable subunit) and subunit B (catalytic subunit). Heterodimeric FTR forms a complex with ferredoxin and thioredoxin. [4Fe-4S] cluster is required as a cofactor.

The protein resides in the plastid. It localises to the chloroplast. The enzyme catalyses [thioredoxin]-disulfide + 2 reduced [2Fe-2S]-[ferredoxin] + 2 H(+) = [thioredoxin]-dithiol + 2 oxidized [2Fe-2S]-[ferredoxin]. Functionally, catalytic subunit of the ferredoxin-thioredoxin reductase (FTR), which catalyzes the two-electron reduction of thioredoxins by the electrons provided by reduced ferredoxin. The protein is Ferredoxin-thioredoxin reductase, catalytic chain (ftrB) of Cyanidium caldarium (Red alga).